The sequence spans 1733 residues: Gag-Pol polyprotein (1733 aa).

Glycine 2 carries N-myristoyl glycine; by host lipidation. Residues 109-112 carry the PTAP/PSAP motif motif; the sequence is PTAP. Residues 128–132 carry the LYPX(n)L motif motif; that stretch reads LYPAL. Disordered stretches follow at residues 139–218, 449–497, and 511–549; these read KPPK…LRMG, KEER…RPQL, and WAKD…PEPR. The PPXY motif signature appears at 161–164; that stretch reads PPPY. At serine 190 the chain carries Phosphoserine; by host. Residues 436 to 476 are a coiled coil; it reads EEREERIRREIEEKEERRRAEDEQRERERDRRRHREMSKLL. Basic and acidic residues-rich tracts occupy residues 449 to 464 and 484 to 497; these read KEER…ERER and RQDR…RPQL. The CCHC-type zinc-finger motif lies at 500–517; the sequence is DQCAYCKEKGHWAKDCPK. Residues 526–535 show a composition bias toward low complexity; that stretch reads RPQTSLLTLG. The region spanning 559–629 is the Peptidase A2 domain; the sequence is VTFLVDTGAQ…CPYPLLGRDL (71 aa). The active-site Protease; shared with dimeric partner is the aspartate 564. 4 residues coordinate RNA: tyrosine 721, aspartate 771, arginine 773, and proline 787. One can recognise a Reverse transcriptase domain in the interval 739–930; the sequence is LDQGILVPCQ…KQVKYLGYLL (192 aa). Aspartate 807 provides a ligand contact to Mg(2+). RNA contacts are provided by asparagine 851 and proline 853. Mg(2+) contacts are provided by aspartate 881 and aspartate 882. 4 residues coordinate DNA: arginine 941, arginine 955, arginine 958, and phenylalanine 966. RNA-binding residues include lysine 1054 and lysine 1055. Tryptophan 1063 is a DNA binding site. Lysine 1082 is an RNA binding site. Residue arginine 1113 participates in DNA binding. The RNase H type-1 domain maps to 1172 to 1318; the sequence is PDADYTWYTD…ADQAAREAAM (147 aa). Aspartate 1181 serves as a coordination point for Mg(2+). The RNA site is built by serine 1184 and leucine 1186. 3 residues coordinate DNA: glutamine 1187, serine 1214, and glutamine 1216. Positions 1219 and 1240 each coordinate Mg(2+). Arginine 1242 and arginine 1266 together coordinate RNA. Aspartate 1310, aspartate 1453, and aspartate 1512 together coordinate Mg(2+). One can recognise an Integrase catalytic domain in the interval 1442–1600; that stretch reads RGHRPGTHWE…TPYEILYGAP (159 aa).

In terms of assembly, homohexamer, that further associates as homomultimer. The virus core is composed of a lattice formed from hexagonal rings, each containing six capsid monomers. The protease is a homodimer, whose active site consists of two apposed aspartic acid residues. The reverse transcriptase is a monomer. As to quaternary structure, interacts (via PPXY motif) with host NEDD4. Interacts (via PSAP motif) with host TSG101. Interacts (via LYPX(n)L motif) with host PDCD6IP. The reverse transcriptase is a monomer (Potential). Interacts (via RNase domains) with host release factor ETF1; this interaction is essential for translational readthrough of amber codon between viral gag and pol genes, as well as for viral replication. In terms of assembly, homodimer. Mg(2+) serves as cofactor. Requires Mn(2+) as cofactor. Post-translationally, specific enzymatic cleavages by the viral protease yield mature proteins. The protease is released by autocatalytic cleavage. The polyprotein is cleaved during and after budding, this process is termed maturation. Sumoylated; which is required for virus replication. In terms of processing, phosphorylated on serine residues.

The protein localises to the host cell membrane. It is found in the virion. It catalyses the reaction DNA(n) + a 2'-deoxyribonucleoside 5'-triphosphate = DNA(n+1) + diphosphate. It carries out the reaction Endonucleolytic cleavage to 5'-phosphomonoester.. Functionally, plays a role in budding and is processed by the viral protease during virion maturation outside the cell. During budding, it recruits, in a PPXY-dependent or independent manner, Nedd4-like ubiquitin ligases that conjugate ubiquitin molecules to Gag, or to Gag binding host factors. Interaction with HECT ubiquitin ligases probably link the viral protein to the host ESCRT pathway and facilitate release. In terms of biological role, targets Gag and gag-pol polyproteins to the plasma membrane via a multipartite membrane binding signal, that includes its myristoylated N-terminus. Also mediates nuclear localization of the pre-integration complex. Its function is as follows. Forms the spherical core of the virion that encapsulates the genomic RNA-nucleocapsid complex. Involved in the packaging and encapsidation of two copies of the genome. Binds with high affinity to conserved UCUG elements within the packaging signal, located near the 5'-end of the genome. This binding is dependent on genome dimerization. Acts as a nucleic acid chaperone which is involved in rearrangement of nucleic acid secondary structures during gRNA retrotranscription. Functionally, the aspartyl protease mediates proteolytic cleavages of Gag and Gag-Pol polyproteins during or shortly after the release of the virion from the plasma membrane. Cleavages take place as an ordered, step-wise cascade to yield mature proteins. This process is called maturation. Displays maximal activity during the budding process just prior to particle release from the cell. In terms of biological role, RT is a multifunctional enzyme that converts the viral dimeric RNA genome into dsDNA in the cytoplasm, shortly after virus entry into the cell. This enzyme displays a DNA polymerase activity that can copy either DNA or RNA templates, and a ribonuclease H (RNase H) activity that cleaves the RNA strand of RNA-DNA heteroduplexes in a partially processive 3' to 5' endonucleasic mode. Conversion of viral genomic RNA into dsDNA requires many steps. A tRNA binds to the primer-binding site (PBS) situated at the 5' end of the viral RNA. RT uses the 3' end of the tRNA primer to perform a short round of RNA-dependent minus-strand DNA synthesis. The reading proceeds through the U5 region and ends after the repeated (R) region which is present at both ends of viral RNA. The portion of the RNA-DNA heteroduplex is digested by the RNase H, resulting in a ssDNA product attached to the tRNA primer. This ssDNA/tRNA hybridizes with the identical R region situated at the 3' end of viral RNA. This template exchange, known as minus-strand DNA strong stop transfer, can be either intra- or intermolecular. RT uses the 3' end of this newly synthesized short ssDNA to perform the RNA-dependent minus-strand DNA synthesis of the whole template. RNase H digests the RNA template except for a polypurine tract (PPT) situated at the 5' end of the genome. It is not clear if both polymerase and RNase H activities are simultaneous. RNase H probably can proceed both in a polymerase-dependent (RNA cut into small fragments by the same RT performing DNA synthesis) and a polymerase-independent mode (cleavage of remaining RNA fragments by free RTs). Secondly, RT performs DNA-directed plus-strand DNA synthesis using the PPT that has not been removed by RNase H as primers. PPT and tRNA primers are then removed by RNase H. The 3' and 5' ssDNA PBS regions hybridize to form a circular dsDNA intermediate. Strand displacement synthesis by RT to the PBS and PPT ends produces a blunt ended, linear dsDNA copy of the viral genome that includes long terminal repeats (LTRs) at both ends. Its function is as follows. Catalyzes viral DNA integration into the host chromosome, by performing a series of DNA cutting and joining reactions. This enzyme activity takes place after virion entry into a cell and reverse transcription of the RNA genome in dsDNA. The first step in the integration process is 3' processing. This step requires a complex comprising the viral genome, matrix protein and integrase. This complex is called the pre-integration complex (PIC). The integrase protein removes 2 nucleotides from each 3' end of the viral DNA, leaving recessed CA OH's at the 3' ends. In the second step that requires cell division, the PIC enters cell nucleus. In the third step, termed strand transfer, the integrase protein joins the previously processed 3' ends to the 5' ends of strands of target cellular DNA at the site of integration. The last step is viral DNA integration into host chromosome. The sequence is that of Gag-Pol polyprotein (gag-pol) from Homo sapiens (Human).